A 331-amino-acid chain; its full sequence is Probable protein phosphatase 2C 1 (331 aa).

Residues 1–29 form a disordered region; it reads MAASSTATRLSPPRLHAPTTPSPHLPLRR. The 245-residue stretch at 48 to 292 folds into the PPM-type phosphatase domain; the sequence is THLIPHPRKA…DDITVIVAQV (245 aa). Mn(2+) is bound by residues Asp-79, Gly-80, Asp-210, and Asp-283. A disordered region spans residues 300–331; sequence DEGVDEEKGQGDEQGSAVAVASSEQKEDSITT.

The protein belongs to the PP2C family. Mg(2+) serves as cofactor. Requires Mn(2+) as cofactor.

The enzyme catalyses O-phospho-L-seryl-[protein] + H2O = L-seryl-[protein] + phosphate. It catalyses the reaction O-phospho-L-threonyl-[protein] + H2O = L-threonyl-[protein] + phosphate. This is Probable protein phosphatase 2C 1 from Oryza sativa subsp. japonica (Rice).